Here is a 747-residue protein sequence, read N- to C-terminus: Tripartite terminase subunit 3 (747 aa).

Residues 194–198 (KRAKV) carry the Nuclear localization signal motif. A Walker A motif motif is present at residues 267-274 (VPRRHGKT). Positions 361-366 (LLFVDE) match the Walker B motif motif. E366 (for ATPase activity) is an active-site residue. Catalysis depends on for nuclease activity residues D521, E593, and D722.

It belongs to the herpesviridae TRM3 protein family. As to quaternary structure, interacts with the terminase subunits TRM1 and TRM2. Interacts with portal protein.

Its subcellular location is the host nucleus. Its function is as follows. Component of the molecular motor that translocates viral genomic DNA in empty capsid during DNA packaging. Forms a tripartite terminase complex together with TRM1 and TRM2 in the host cytoplasm. Once the complex reaches the host nucleus, it interacts with the capsid portal vertex. This portal forms a ring in which genomic DNA is translocated into the capsid. TRM3 carries an RNase H-like nuclease activity that plays an important role for the cleavage of concatemeric viral DNA into unit length genomes. This Homo sapiens (Human) protein is Tripartite terminase subunit 3.